The sequence spans 461 residues: Phosphoglucosamine mutase (461 aa).

The active-site Phosphoserine intermediate is the serine 118. The Mg(2+) site is built by serine 118, aspartate 255, aspartate 257, and aspartate 259. A Phosphoserine modification is found at serine 118.

Belongs to the phosphohexose mutase family. The cofactor is Mg(2+). Post-translationally, activated by phosphorylation.

It carries out the reaction alpha-D-glucosamine 1-phosphate = D-glucosamine 6-phosphate. In terms of biological role, catalyzes the conversion of glucosamine-6-phosphate to glucosamine-1-phosphate. This chain is Phosphoglucosamine mutase, found in Acidothermus cellulolyticus (strain ATCC 43068 / DSM 8971 / 11B).